The following is a 357-amino-acid chain: Malonyl CoA reductase (NADP) (357 aa).

13–16 contacts NADP(+); the sequence is TGLV. Cysteine 150 functions as the Acyl-thioester intermediate in the catalytic mechanism. NADP(+) is bound at residue 180–181; the sequence is SG. Histidine 245 functions as the Proton acceptor in the catalytic mechanism. NADP(+) is bound at residue 332–333; that stretch reads NT.

This sequence belongs to the aspartate-semialdehyde dehydrogenase family. Homotetramer.

The catalysed reaction is 3-oxopropanoate + NADP(+) + CoA = malonyl-CoA + NADPH + H(+). In terms of biological role, catalyzes the reduction of malonyl-CoA to malonate semialdehyde, a key step in the 3-hydroxypropanoate and the 3-hydroxypropanoate/4-hydroxybutyrate cycles. The sequence is that of Malonyl CoA reductase (NADP) from Metallosphaera sedula (strain ATCC 51363 / DSM 5348 / JCM 9185 / NBRC 15509 / TH2).